The following is a 190-amino-acid chain: Xanthine phosphoribosyltransferase (190 aa).

Xanthine-binding residues include Leu-20 and Asn-27. 129–133 (ASGSA) provides a ligand contact to 5-phospho-alpha-D-ribose 1-diphosphate. Xanthine is bound at residue Lys-157.

Belongs to the purine/pyrimidine phosphoribosyltransferase family. Xpt subfamily. Homodimer.

Its subcellular location is the cytoplasm. The enzyme catalyses XMP + diphosphate = xanthine + 5-phospho-alpha-D-ribose 1-diphosphate. It participates in purine metabolism; XMP biosynthesis via salvage pathway; XMP from xanthine: step 1/1. Converts the preformed base xanthine, a product of nucleic acid breakdown, to xanthosine 5'-monophosphate (XMP), so it can be reused for RNA or DNA synthesis. The sequence is that of Xanthine phosphoribosyltransferase from Clostridium tetani (strain Massachusetts / E88).